The primary structure comprises 68 residues: Large ribosomal subunit protein bL35 (68 aa).

2 stretches are compositionally biased toward basic residues: residues 1 to 15 and 23 to 38; these read MPKM…KRFK and TARK…HKSS. Residues 1-38 form a disordered region; sequence MPKMKSHSGTKKRFKVTGSGKVTARKAGKRHLNEHKSS.

The protein belongs to the bacterial ribosomal protein bL35 family.

This is Large ribosomal subunit protein bL35 from Cutibacterium acnes (strain DSM 16379 / KPA171202) (Propionibacterium acnes).